The following is a 396-amino-acid chain: S-adenosylmethionine synthase (396 aa).

His-16 serves as a coordination point for ATP. Asp-18 provides a ligand contact to Mg(2+). Glu-44 provides a ligand contact to K(+). Residues Glu-57 and Gln-100 each contribute to the L-methionine site. The interval 100–110 (QSVDIAQGVDR) is flexible loop. ATP contacts are provided by residues 165–167 (DAK), Asp-240, 246–247 (RK), Ala-263, and Lys-267. An L-methionine-binding site is contributed by Asp-240. Lys-271 contributes to the L-methionine binding site.

This sequence belongs to the AdoMet synthase family. As to quaternary structure, homotetramer; dimer of dimers. Mg(2+) serves as cofactor. It depends on K(+) as a cofactor.

The protein localises to the cytoplasm. It catalyses the reaction L-methionine + ATP + H2O = S-adenosyl-L-methionine + phosphate + diphosphate. Its pathway is amino-acid biosynthesis; S-adenosyl-L-methionine biosynthesis; S-adenosyl-L-methionine from L-methionine: step 1/1. In terms of biological role, catalyzes the formation of S-adenosylmethionine (AdoMet) from methionine and ATP. The overall synthetic reaction is composed of two sequential steps, AdoMet formation and the subsequent tripolyphosphate hydrolysis which occurs prior to release of AdoMet from the enzyme. The polypeptide is S-adenosylmethionine synthase (Pseudomonas savastanoi pv. phaseolicola (strain 1448A / Race 6) (Pseudomonas syringae pv. phaseolicola (strain 1448A / Race 6))).